The sequence spans 341 residues: Shk1 kinase-binding protein 15 (341 aa).

WD repeat units lie at residues 33–70, 77–114, 119–157, 197–234, and 237–274; these read AHEG…QIAD, IANA…LVHT, SHKG…GGKV, SSKS…ILHE, and AHKK…VIEH. The disordered stretch occupies residues 293–341; that stretch reads NSEPKNVEDEAAKRQSLDSETSETSSESESESEYYSTSKQPPVKRTKHA. A compositionally biased stretch (basic and acidic residues) spans 297-309; sequence KNVEDEAAKRQSL.

In terms of biological role, negatively regulates pak1/shk1 kinase activity leading to proper execution of cytoskeletal remodeling and cytokinetic functions. Functionally, interacts with pak1/shk1. This Schizosaccharomyces pombe (strain 972 / ATCC 24843) (Fission yeast) protein is Shk1 kinase-binding protein 15 (skb15).